A 231-amino-acid polypeptide reads, in one-letter code: Flagellar L-ring protein (231 aa).

The signal sequence occupies residues 1–18 (MNRLLSLFALGGAVLLAG). A lipid anchor (N-palmitoyl cysteine) is attached at Cys-19. The S-diacylglycerol cysteine moiety is linked to residue Cys-19.

Belongs to the FlgH family. As to quaternary structure, the basal body constitutes a major portion of the flagellar organelle and consists of four rings (L,P,S, and M) mounted on a central rod.

The protein resides in the cell outer membrane. It is found in the bacterial flagellum basal body. Assembles around the rod to form the L-ring and probably protects the motor/basal body from shearing forces during rotation. The chain is Flagellar L-ring protein from Pseudomonas putida (strain W619).